The primary structure comprises 32 residues: Trypsin inhibitor 4 (32 aa).

Intrachain disulfides connect Cys-6-Cys-23, Cys-13-Cys-25, and Cys-19-Cys-31.

The protein belongs to the protease inhibitor I7 (squash-type serine protease inhibitor) family.

Its subcellular location is the secreted. Functionally, inhibits trypsin. The protein is Trypsin inhibitor 4 of Cucurbita maxima (Pumpkin).